A 144-amino-acid polypeptide reads, in one-letter code: D-aminoacyl-tRNA deacylase (144 aa).

A Gly-cisPro motif, important for rejection of L-amino acids motif is present at residues 136 to 137 (GP).

Belongs to the DTD family. As to quaternary structure, homodimer.

It is found in the cytoplasm. The enzyme catalyses glycyl-tRNA(Ala) + H2O = tRNA(Ala) + glycine + H(+). It catalyses the reaction a D-aminoacyl-tRNA + H2O = a tRNA + a D-alpha-amino acid + H(+). Its function is as follows. An aminoacyl-tRNA editing enzyme that deacylates mischarged D-aminoacyl-tRNAs. Also deacylates mischarged glycyl-tRNA(Ala), protecting cells against glycine mischarging by AlaRS. Acts via tRNA-based rather than protein-based catalysis; rejects L-amino acids rather than detecting D-amino acids in the active site. By recycling D-aminoacyl-tRNA to D-amino acids and free tRNA molecules, this enzyme counteracts the toxicity associated with the formation of D-aminoacyl-tRNA entities in vivo and helps enforce protein L-homochirality. This Actinobacillus pleuropneumoniae serotype 5b (strain L20) protein is D-aminoacyl-tRNA deacylase.